Here is a 501-residue protein sequence, read N- to C-terminus: Glycine betaine/proline/ectoine/pipecolic acid transporter OusA (501 aa).

Topologically, residues 1 to 38 are cytoplasmic; it reads MKLKRKRVKPIALDDVTIIDDGRLRKAITAAALGNAME. The helical transmembrane segment at 39–59 threads the bilayer; sequence WFDFGVYGFVAYALGQVFFPG. At 60–66 the chain is on the periplasmic side; the sequence is ADPGVQM. The chain crosses the membrane as a helical span at residues 67 to 87; that stretch reads IAALATFSVPFLIRPLGGVFF. Over 88–98 the chain is Cytoplasmic; that stretch reads GALGDKYGRQK. A helical transmembrane segment spans residues 99–119; the sequence is ILAITIIIMSISTFCIGLIPS. Topologically, residues 120 to 122 are periplasmic; it reads YER. Residues 123-143 form a helical membrane-spanning segment; that stretch reads IGIWAPILLLLAKMAQGFSVG. At 144–170 the chain is on the cytoplasmic side; sequence GEYTGASIFVAEYSPDRKRGFMGSWLD. The helical transmembrane segment at 171 to 191 threads the bilayer; that stretch reads FGSIAGFVLGAGVVVLISTLI. The Periplasmic segment spans residues 192–195; the sequence is GEQA. A helical transmembrane segment spans residues 196–216; that stretch reads FLAWGWRLPFFLALPLGLIGL. Over 217–261 the chain is Cytoplasmic; the sequence is YLRHALEETPAFRQHVEKLEQNDRDGLKAGPGVSFREIATHHWKS. A helical membrane pass occupies residues 262 to 282; sequence LLVCIGLVIATNVTYYMLLTY. Topologically, residues 283-298 are periplasmic; it reads MPSYLSHSLHYSENHG. A helical transmembrane segment spans residues 299 to 319; it reads VLIIIAIMIGMLFVQPVMGLL. Topologically, residues 320–326 are cytoplasmic; the sequence is SDRFGRK. Residues 327 to 347 form a helical membrane-spanning segment; sequence PFVVIGSVAMFFLAVPSFMLI. Residues 348–350 are Periplasmic-facing; the sequence is NSD. A helical membrane pass occupies residues 351–371; it reads IIGLIFLGLLMLAVILNAFTG. The Cytoplasmic segment spans residues 372–391; sequence VMASTLPALFPTHIRYSALA. The chain crosses the membrane as a helical span at residues 392–412; the sequence is SAFNISVLIAGLTPTVAAWLV. Over 413 to 417 the chain is Periplasmic; the sequence is ESSQN. Residues 418-438 form a helical membrane-spanning segment; it reads LYMPAYYLMVIAVIGLLTGLF. Over 439–501 the chain is Cytoplasmic; the sequence is MKETANKPLK…LVAQHPRIND (63 aa). Residues 461–495 adopt a coiled-coil conformation; the sequence is KEILQEHHDNIEHKIEDITQQIAELEAKRQLLVAQ.

This sequence belongs to the major facilitator superfamily. Sugar transporter (TC 2.A.1.1) family.

The protein localises to the cell inner membrane. Involved in uptake and accumulation of various osmoprotectants. Allows the uptake of glycine betaine, proline, ectoine, and pipecolic acid. May be a contributory factor in the infection progression within the host. This is Glycine betaine/proline/ectoine/pipecolic acid transporter OusA from Dickeya dadantii (strain 3937) (Erwinia chrysanthemi (strain 3937)).